A 789-amino-acid chain; its full sequence is MEVLDATSLAERLKWEAKGYWLHFEAETPLEKYPAKQHARRVQEKLGIEEGLIYLSGQQARNNEDSDMPAPFRQLRYFYYLSGGPTLAEALVKYDVDEVYYSDEVSDYIIDWYHHSCNRGKLYTLHDPAKSPIGNHHAPIDSVSLQPAMNVARMIKDEHEIKLIRKANDISSKAHREVLSNILKFTNEAQVEGLFLDVCVSHQAKQQAYDPIAASGPNAGTLHYDANDEDFGKRQLMCLDAGCEYELYASDITRTFPLSSKWPSKEAANIYRLVERMQELCIKRLAPGVRYLDLHILAHQIAIDGLLALGILHNGTKEEIYKAGTSRAFFPHGLGHHIGLEVHDVGQAELMSVRRGKQVLEQSSHLEEGMIVTVEPGIYFSVYALQHFYLPSPVHSKYINLEVLNRYLPVGGVRIEDDILITAKSYENLTTAPKGDEMLEIIQRGRSNVNSIPARRQSGRTQITEDEPPLLRAPGISASTPQSILRPIARSSTMPAELKQDKSVDFEPFEGPSLFSNFRRSMTTDEKIQRWQQDHIPTTATRINLTPSSQYKSVCGSNTREVKHVYMISGSFPPGTARGALREQILPACKQCTILCETLDRLRQSLSMSKESPEAELDVSPVISQKQIRNRRSVSSTARHDLRGDRERPQHSPMTGLANGLSAMCLEPLNHVSESPTPSQRRAGGCTPHWRGQNRADQSGDDALRAAQETQILQSKPSVRSNPATDQLSAKAVSDVLLELQRQGPAAGSDRCTLGKQEGVEGIPAISRAKNFHVSTGGSMVGEARRAEE.

Residues aspartate 240, aspartate 251, glutamate 375, and glutamate 416 each coordinate Mn(2+). Disordered regions lie at residues 607 to 658 (SMSK…TGLA) and 670 to 704 (NHVS…DDAL). Over residues 622–637 (VISQKQIRNRRSVSST) the composition is skewed to polar residues. Positions 638–650 (ARHDLRGDRERPQ) are enriched in basic and acidic residues.

This sequence belongs to the peptidase M24B family. Mn(2+) is required as a cofactor.

The catalysed reaction is Release of any N-terminal amino acid, including proline, that is linked to proline, even from a dipeptide or tripeptide.. Its function is as follows. Catalyzes the removal of a penultimate prolyl residue from the N-termini of peptides. This Phaeosphaeria nodorum (strain SN15 / ATCC MYA-4574 / FGSC 10173) (Glume blotch fungus) protein is Probable Xaa-Pro aminopeptidase SNOG_02267.